The primary structure comprises 213 residues: Ras-like protein rasU (213 aa).

Gly21–Thr28 is a GTP binding site. An Effector region motif is present at residues Tyr43–Tyr51. GTP contacts are provided by residues Asp68–Gln72 and Asn126–Asp129. The residue at position 210 (Cys210) is a Cysteine methyl ester. Cys210 carries S-geranylgeranyl cysteine lipidation. Residues Lys211–Ile213 constitute a propeptide, removed in mature form.

The protein belongs to the small GTPase superfamily. Ras family.

The protein localises to the cell membrane. It catalyses the reaction GTP + H2O = GDP + phosphate + H(+). Its function is as follows. Ras proteins bind GDP/GTP and possess intrinsic GTPase activity. In Dictyostelium discoideum (Social amoeba), this protein is Ras-like protein rasU (rasU).